The primary structure comprises 265 residues: 4-diphosphocytidyl-2-C-methyl-D-erythritol kinase (265 aa).

K8 is an active-site residue. 95–105 (PIGAGLGGGSS) lines the ATP pocket. The active site involves D135.

The protein belongs to the GHMP kinase family. IspE subfamily.

The enzyme catalyses 4-CDP-2-C-methyl-D-erythritol + ATP = 4-CDP-2-C-methyl-D-erythritol 2-phosphate + ADP + H(+). Its pathway is isoprenoid biosynthesis; isopentenyl diphosphate biosynthesis via DXP pathway; isopentenyl diphosphate from 1-deoxy-D-xylulose 5-phosphate: step 3/6. Catalyzes the phosphorylation of the position 2 hydroxy group of 4-diphosphocytidyl-2C-methyl-D-erythritol. In Ureaplasma parvum serovar 3 (strain ATCC 27815 / 27 / NCTC 11736), this protein is 4-diphosphocytidyl-2-C-methyl-D-erythritol kinase.